We begin with the raw amino-acid sequence, 733 residues long: Methionine--tRNA ligase (733 aa).

A 'HIGH' region motif is present at residues Pro11–His21. 4 residues coordinate Zn(2+): Cys143, Cys146, Cys156, and Cys159. The short motif at Lys345–Ser349 is the 'KMSKS' region element. Thr348 is a binding site for ATP. The tRNA-binding domain maps to Asp633–Arg733.

This sequence belongs to the class-I aminoacyl-tRNA synthetase family. MetG type 1 subfamily. Homodimer. Requires Zn(2+) as cofactor.

It localises to the cytoplasm. It catalyses the reaction tRNA(Met) + L-methionine + ATP = L-methionyl-tRNA(Met) + AMP + diphosphate. Functionally, is required not only for elongation of protein synthesis but also for the initiation of all mRNA translation through initiator tRNA(fMet) aminoacylation. This Thermococcus onnurineus (strain NA1) protein is Methionine--tRNA ligase.